The primary structure comprises 497 residues: Interferon regulatory factor 5 (497 aa).

The short motif at 12–18 (PRRVRLK) is the Nuclear localization signal element. The segment at residues 14 to 122 (RVRLKPWLVA…QPYKIYEVCS (109 aa)) is a DNA-binding region (IRF tryptophan pentad repeat). The interval 124 to 178 (GPAPTESQPTDDYVLGEEEEEEEEELQRMLPGLSITEPALPGPPNAPYSLPKEDT) is disordered. Positions 137 to 148 (VLGEEEEEEEEE) are enriched in acidic residues. Residues 149-159 (LQRMLPGLSIT) carry the Nuclear export signal motif. Ser-157 is subject to Phosphoserine; by TBK1. Ser-300 bears the Phosphoserine mark. Residues Lys-410 and Lys-411 each participate in a glycyl lysine isopeptide (Lys-Gly) (interchain with G-Cter in ubiquitin) cross-link. Residue Ser-430 is modified to Phosphoserine. Ser-434 is modified (phosphoserine; by IKKB). Phosphoserine is present on residues Ser-436 and Ser-439. The residue at position 445 (Ser-445) is a Phosphoserine; by IKKB.

This sequence belongs to the IRF family. As to quaternary structure, homodimer, when phosphorylated. Interacts with TASL (via pLxIS motif); interaction takes place downstream of TLR7, TLR8 or TLR9, leading to its activation. Interacts with MYD88 and TRAF6. In terms of processing, phosphorylation of serine and threonine residues by IKBKB in a C-terminal autoinhibitory region, stimulates dimerization, transport into the nucleus, assembly with the coactivator CBP/EP300 and initiation of transcription. 'Lys-63'-linked polyubiquitination by TRAF6 is required for activation.

Its subcellular location is the cytoplasm. The protein localises to the nucleus. With respect to regulation, maintained as a monomer in an autoinhibited state. Phosphorylation and activation follow the following steps: innate adapter protein TASL recruits IRF5, thereby licensing IRF5 for phosphorylation by IKBKB. Phosphorylated IRF5 dissociates from the adapter proteins, dimerizes, and then enters the nucleus to induce IFNs. Its function is as follows. Transcription factor that plays a critical role in innate immunity by activating expression of type I interferon (IFN) IFNA and INFB and inflammatory cytokines downstream of endolysosomal toll-like receptors TLR7, TLR8 and TLR9. Regulates the transcription of type I IFN genes (IFN-alpha and IFN-beta) and IFN-stimulated genes (ISG) by binding to an interferon-stimulated response element (ISRE) in their promoters. Can efficiently activate both the IFN-beta (IFNB) and the IFN-alpha (IFNA) genes and mediate their induction downstream of the TLR-activated, MyD88-dependent pathway. The protein is Interferon regulatory factor 5 of Mus musculus (Mouse).